We begin with the raw amino-acid sequence, 437 residues long: Protein disulfide-isomerase tmx3a (437 aa).

Positions 1–21 are cleaved as a signal peptide; it reads MANMRNIILTALLSAIALVSG. One can recognise a Thioredoxin domain in the interval 22–126; it reads YVEGLDDKFT…IIEFTNRVSG (105 aa). The Extracellular segment spans residues 22-368; sequence YVEGLDDKFT…KNTVMSMVET (347 aa). Residues C48 and C51 each act as nucleophile in the active site. C48 and C51 are joined by a disulfide. N308 is a glycosylation site (N-linked (GlcNAc...) asparagine). A helical transmembrane segment spans residues 369–389; that stretch reads APVFSCFVLGLPVGVVVLVIY. Residues 390–437 are Cytoplasmic-facing; that stretch reads ATCTAVPADDEKPEEEATASPALDTHGKKAIESQPESTEKTSEAKKED. The interval 398-437 is disordered; sequence DDEKPEEEATASPALDTHGKKAIESQPESTEKTSEAKKED. Basic and acidic residues predominate over residues 414–437; that stretch reads THGKKAIESQPESTEKTSEAKKED. The Di-lysine motif motif lies at 434–437; sequence KKED.

Its subcellular location is the endoplasmic reticulum membrane. It catalyses the reaction Catalyzes the rearrangement of -S-S- bonds in proteins.. Functionally, probable disulfide isomerase, which participates in the folding of proteins containing disulfide bonds. May act as a dithiol oxidase. Acts as a regulator of endoplasmic reticulum-mitochondria contact sites via its ability to regulate redox signals. The polypeptide is Protein disulfide-isomerase tmx3a (tmx3a) (Danio rerio (Zebrafish)).